Here is a 194-residue protein sequence, read N- to C-terminus: Holliday junction branch migration complex subunit RuvA (194 aa).

The domain I stretch occupies residues 1–61 (MYDFLTGIIK…DNQISLYGFK (61 aa)). The interval 62 to 139 (TVKERNLFQK…GDFSKNIAPM (78 aa)) is domain II. Residues 139-143 (MKNLL) are flexible linker. Residues 144-194 (ENSAELDDALAALVALGFSSKEVNKINPKLASLGELTTDAYIQKGLKLLTK) are domain III.

The protein belongs to the RuvA family. In terms of assembly, homotetramer. Forms an RuvA(8)-RuvB(12)-Holliday junction (HJ) complex. HJ DNA is sandwiched between 2 RuvA tetramers; dsDNA enters through RuvA and exits via RuvB. An RuvB hexamer assembles on each DNA strand where it exits the tetramer. Each RuvB hexamer is contacted by two RuvA subunits (via domain III) on 2 adjacent RuvB subunits; this complex drives branch migration. In the full resolvosome a probable DNA-RuvA(4)-RuvB(12)-RuvC(2) complex forms which resolves the HJ.

Its subcellular location is the cytoplasm. Functionally, the RuvA-RuvB-RuvC complex processes Holliday junction (HJ) DNA during genetic recombination and DNA repair, while the RuvA-RuvB complex plays an important role in the rescue of blocked DNA replication forks via replication fork reversal (RFR). RuvA specifically binds to HJ cruciform DNA, conferring on it an open structure. The RuvB hexamer acts as an ATP-dependent pump, pulling dsDNA into and through the RuvAB complex. HJ branch migration allows RuvC to scan DNA until it finds its consensus sequence, where it cleaves and resolves the cruciform DNA. This Oenococcus oeni (strain ATCC BAA-331 / PSU-1) protein is Holliday junction branch migration complex subunit RuvA.